Reading from the N-terminus, the 201-residue chain is Small ribosomal subunit protein uS4c (201 aa).

The tract at residues 15–43 is disordered; the sequence is LGALPGLTRKTPKSGSNQKKKFHSGKKEQ. In terms of domain architecture, S4 RNA-binding spans 89 to 150; the sequence is MRLDNILFRL…NQRSKRLVQN (62 aa).

This sequence belongs to the universal ribosomal protein uS4 family. In terms of assembly, part of the 30S ribosomal subunit. Contacts protein S5. The interaction surface between S4 and S5 is involved in control of translational fidelity.

The protein localises to the plastid. It localises to the chloroplast. Functionally, one of the primary rRNA binding proteins, it binds directly to 16S rRNA where it nucleates assembly of the body of the 30S subunit. Its function is as follows. With S5 and S12 plays an important role in translational accuracy. The polypeptide is Small ribosomal subunit protein uS4c (rps4) (Sorghum bicolor (Sorghum)).